The chain runs to 102 residues: RxLR effector protein PexRD41 (102 aa).

Positions 1–21 (MRSIFYFALAFAALTCSNASA) are cleaved as a signal peptide. Residues 39–53 (RSLRVAGQEAARGEE) carry the RxLR-dEER motif.

The protein belongs to the RxLR effector family. In terms of assembly, interacts with host KRBP1.

The protein localises to the secreted. The protein resides in the host cytoplasm. Its subcellular location is the host nucleus. It localises to the host nucleolus. Effector that enhances P.infestans colonization of host plant leaves. During the early stages of P.infestans infection, interacts with and stabilizes host potato K-homology (KH) RNA-binding protein KRBP1, leading to its accumulation. This Phytophthora infestans (strain T30-4) (Potato late blight agent) protein is RxLR effector protein PexRD41.